The sequence spans 214 residues: Osteoclast-stimulating factor 1 (214 aa).

S2 carries the post-translational modification N-acetylserine. The SH3 domain occupies 12 to 71; it reads GQVKVFRALYTFEPRTPDELYFEEGDIIYITDMSDTNWWKGTSKGRTGLIPSNYVAEQAE. ANK repeat units follow at residues 72-101, 105-135, and 139-168; these read SIDNPLHEAAKRGNLSWLRECLDNRVGVNG, AGSTALYWACHGGHKDIVDMLFTQPNIELNQ, and LGDTALHAAAWKGYADIVQLLLAKGARTDL. T200 carries the phosphothreonine modification. A phosphoserine mark is found at S202 and S213.

As to quaternary structure, interacts with SRC and SMN1. Interacts with FASLG.

The protein resides in the cytoplasm. Induces bone resorption, acting probably through a signaling cascade which results in the secretion of factor(s) enhancing osteoclast formation and activity. In Sus scrofa (Pig), this protein is Osteoclast-stimulating factor 1 (OSTF1).